The sequence spans 719 residues: Fatty acid oxidation complex subunit alpha (719 aa).

Residues 1–190 are enoyl-CoA hydratase/isomerase; that stretch reads MVYQGNRITV…KLGLVDATVA (190 aa). Position 298 (D298) interacts with substrate. The 3-hydroxyacyl-CoA dehydrogenase stretch occupies residues 313-719; that stretch reads HDINEAAVLG…AAGETFYATA (407 aa). NAD(+)-binding positions include M326, D345, 402 to 404, K409, and S431; that span reads VVE. Residue H452 is the For 3-hydroxyacyl-CoA dehydrogenase activity of the active site. N455 serves as a coordination point for NAD(+). Substrate is bound at residue N502.

In the N-terminal section; belongs to the enoyl-CoA hydratase/isomerase family. It in the C-terminal section; belongs to the 3-hydroxyacyl-CoA dehydrogenase family. Heterotetramer of two alpha chains (FadB) and two beta chains (FadA).

It carries out the reaction a (3S)-3-hydroxyacyl-CoA + NAD(+) = a 3-oxoacyl-CoA + NADH + H(+). The enzyme catalyses a (3S)-3-hydroxyacyl-CoA = a (2E)-enoyl-CoA + H2O. The catalysed reaction is a 4-saturated-(3S)-3-hydroxyacyl-CoA = a (3E)-enoyl-CoA + H2O. It catalyses the reaction (3S)-3-hydroxybutanoyl-CoA = (3R)-3-hydroxybutanoyl-CoA. It carries out the reaction a (3Z)-enoyl-CoA = a 4-saturated (2E)-enoyl-CoA. The enzyme catalyses a (3E)-enoyl-CoA = a 4-saturated (2E)-enoyl-CoA. It participates in lipid metabolism; fatty acid beta-oxidation. Its function is as follows. Involved in the aerobic and anaerobic degradation of long-chain fatty acids via beta-oxidation cycle. Catalyzes the formation of 3-oxoacyl-CoA from enoyl-CoA via L-3-hydroxyacyl-CoA. It can also use D-3-hydroxyacyl-CoA and cis-3-enoyl-CoA as substrate. The chain is Fatty acid oxidation complex subunit alpha from Psychrobacter cryohalolentis (strain ATCC BAA-1226 / DSM 17306 / VKM B-2378 / K5).